A 390-amino-acid chain; its full sequence is Serpin B4 (390 aa).

M1 carries the post-translational modification N-acetylmethionine.

The protein belongs to the serpin family. Ov-serpin subfamily. As to expression, squamous cells.

It localises to the cytoplasm. Functionally, may act as a protease inhibitor to modulate the host immune response against tumor cells. The sequence is that of Serpin B4 (SERPINB4) from Homo sapiens (Human).